Consider the following 327-residue polypeptide: Probable tRNA-dihydrouridine synthase (327 aa).

Residues proline 17–serine 19 and glutamine 72 contribute to the FMN site. Cysteine 102 functions as the Proton donor in the catalytic mechanism. Residues lysine 141, asparagine 202–aspartate 204, and glycine 226–arginine 227 each bind FMN.

It belongs to the Dus family. It depends on FMN as a cofactor.

It carries out the reaction a 5,6-dihydrouridine in tRNA + NAD(+) = a uridine in tRNA + NADH + H(+). It catalyses the reaction a 5,6-dihydrouridine in tRNA + NADP(+) = a uridine in tRNA + NADPH + H(+). Its function is as follows. Catalyzes the synthesis of 5,6-dihydrouridine (D), a modified base found in the D-loop of most tRNAs, via the reduction of the C5-C6 double bond in target uridines. This is Probable tRNA-dihydrouridine synthase (dus) from Rickettsia prowazekii (strain Madrid E).